A 275-amino-acid chain; its full sequence is Light-independent protochlorophyllide reductase iron-sulfur ATP-binding protein (275 aa).

ATP-binding positions include 12–17 (GIGKST) and lysine 41. Serine 16 is a binding site for Mg(2+). [4Fe-4S] cluster contacts are provided by cysteine 97 and cysteine 131. ATP is bound at residue 182 to 183 (NR).

The protein belongs to the NifH/BchL/ChlL family. Homodimer. Protochlorophyllide reductase is composed of three subunits; BchL, BchN and BchB. Requires [4Fe-4S] cluster as cofactor.

It carries out the reaction chlorophyllide a + oxidized 2[4Fe-4S]-[ferredoxin] + 2 ADP + 2 phosphate = protochlorophyllide a + reduced 2[4Fe-4S]-[ferredoxin] + 2 ATP + 2 H2O. Its pathway is porphyrin-containing compound metabolism; bacteriochlorophyll biosynthesis (light-independent). Functionally, component of the dark-operative protochlorophyllide reductase (DPOR) that uses Mg-ATP and reduced ferredoxin to reduce ring D of protochlorophyllide (Pchlide) to form chlorophyllide a (Chlide). This reaction is light-independent. The L component serves as a unique electron donor to the NB-component of the complex, and binds Mg-ATP. This Pelodictyon phaeoclathratiforme (strain DSM 5477 / BU-1) protein is Light-independent protochlorophyllide reductase iron-sulfur ATP-binding protein.